The chain runs to 197 residues: Gene 49 protein (197 aa).

Disordered regions lie at residues 1 to 49 and 114 to 157; these read MRGN…EVRP and FANL…RFCK. A compositionally biased stretch (gly residues) spans 117 to 135; the sequence is LGGGSKPNSGGGGSGGGGQ. The span at 136–146 shows a compositional bias: low complexity; sequence QHQSRAPQQAQ.

The polypeptide is Gene 49 protein (49) (Mycobacterium phage D29 (Mycobacteriophage D29)).